The following is a 509-amino-acid chain: Subtelomeric hrmA-associated cluster protein AFUB_078990 (509 aa).

Part of the subtelomeric hrmA-associated cluster (HAC) containing genes that alter the hyphal surface (such as reduced total chitin or increased beta-glucan exposure) and perturb inter-hyphal interactions within the developing biofilms, resulting in a loss of vertically aligned polarized growing filaments. Consequently, this hypoxia-typic morphotype (called H-MORPH) with altered biofilm architecture leads to increased hypoxia fitness, increased host inflammation, rapid disease progression, and mortality in a murine model of invasive aspergillosis. The sequence is that of Subtelomeric hrmA-associated cluster protein AFUB_078990 from Aspergillus fumigatus (strain CBS 144.89 / FGSC A1163 / CEA10) (Neosartorya fumigata).